A 126-amino-acid polypeptide reads, in one-letter code: Acidic phospholipase A2 4 (126 aa).

Residue serine 1 is a signal peptide. A propeptide spanning residues 2–7 (NRPMPL) is cleaved from the precursor. Intrachain disulfides connect cysteine 18/cysteine 78, cysteine 33/cysteine 125, cysteine 35/cysteine 51, cysteine 50/cysteine 106, cysteine 57/cysteine 99, cysteine 67/cysteine 92, and cysteine 85/cysteine 97. Positions 34, 36, and 38 each coordinate Ca(2+). Residue histidine 54 is part of the active site. Position 55 (aspartate 55) interacts with Ca(2+). Residue aspartate 100 is part of the active site.

Belongs to the phospholipase A2 family. Group I subfamily. D49 sub-subfamily. In terms of assembly, monomer. Ca(2+) serves as cofactor. Expressed by the venom gland.

Its subcellular location is the secreted. It catalyses the reaction a 1,2-diacyl-sn-glycero-3-phosphocholine + H2O = a 1-acyl-sn-glycero-3-phosphocholine + a fatty acid + H(+). Its function is as follows. Snake venom phospholipase A2 (PLA2) that exhibits strong anticoagulant activity, which is not due to the catalytic activity. PLA2 catalyzes the calcium-dependent hydrolysis of the 2-acyl groups in 3-sn-phosphoglycerides. This chain is Acidic phospholipase A2 4, found in Naja sagittifera (Andaman cobra).